The following is a 597-amino-acid chain: Phosphomethylpyrimidine synthase (597 aa).

Substrate is bound by residues N207, M236, Y265, H301, 321 to 323, 362 to 365, and E401; these read SRG and DGLR. Residue H405 participates in Zn(2+) binding. Y428 is a binding site for substrate. Residue H469 participates in Zn(2+) binding. 3 residues coordinate [4Fe-4S] cluster: C549, C552, and C557.

It belongs to the ThiC family. In terms of assembly, homodimer. The cofactor is [4Fe-4S] cluster.

The enzyme catalyses 5-amino-1-(5-phospho-beta-D-ribosyl)imidazole + S-adenosyl-L-methionine = 4-amino-2-methyl-5-(phosphooxymethyl)pyrimidine + CO + 5'-deoxyadenosine + formate + L-methionine + 3 H(+). Its pathway is cofactor biosynthesis; thiamine diphosphate biosynthesis. Catalyzes the synthesis of the hydroxymethylpyrimidine phosphate (HMP-P) moiety of thiamine from aminoimidazole ribotide (AIR) in a radical S-adenosyl-L-methionine (SAM)-dependent reaction. In Gluconobacter oxydans (strain 621H) (Gluconobacter suboxydans), this protein is Phosphomethylpyrimidine synthase.